The primary structure comprises 266 residues: 3-methyl-2-oxobutanoate hydroxymethyltransferase (266 aa).

Positions 45 and 84 each coordinate Mg(2+). 3-methyl-2-oxobutanoate is bound by residues Asp-45 to Ser-46, Asp-84, and Lys-113. Glu-115 serves as a coordination point for Mg(2+). Glu-183 functions as the Proton acceptor in the catalytic mechanism.

It belongs to the PanB family. As to quaternary structure, homodecamer; pentamer of dimers. The cofactor is Mg(2+).

It is found in the cytoplasm. It catalyses the reaction 3-methyl-2-oxobutanoate + (6R)-5,10-methylene-5,6,7,8-tetrahydrofolate + H2O = 2-dehydropantoate + (6S)-5,6,7,8-tetrahydrofolate. Its pathway is cofactor biosynthesis; (R)-pantothenate biosynthesis; (R)-pantoate from 3-methyl-2-oxobutanoate: step 1/2. Its function is as follows. Catalyzes the reversible reaction in which hydroxymethyl group from 5,10-methylenetetrahydrofolate is transferred onto alpha-ketoisovalerate to form ketopantoate. In Coxiella burnetii (strain Dugway 5J108-111), this protein is 3-methyl-2-oxobutanoate hydroxymethyltransferase.